Consider the following 2958-residue polypeptide: Protein CSF1 (2958 aa).

Residues 1–17 lie on the Cytoplasmic side of the membrane; it reads MEAISQLRGVPLTHQKD. Residues 18-38 form a helical; Signal-anchor for type II membrane protein membrane-spanning segment; that stretch reads FSWVFLVDWILTVVVCLTMIF. The Extracellular portion of the chain corresponds to 39-2958; it reads YMGRIYAYLV…QYVKILDDTH (2920 aa). Residues Asn82, Asn117, Asn144, Asn271, Asn478, Asn530, Asn816, Asn821, Asn839, and Asn892 are each glycosylated (N-linked (GlcNAc...) asparagine). The disordered stretch occupies residues 813-834; it reads GYQNSSLKNESEDKGPMKRSDL. A compositionally biased stretch (basic and acidic residues) spans 821–834; that stretch reads NESEDKGPMKRSDL. Residues 1175 to 1196 form a disordered region; that stretch reads MEPSRASFSEDDNDEEADPSSF. Acidic residues predominate over residues 1183–1192; that stretch reads SEDDNDEEAD. Asn1309, Asn1368, Asn1453, Asn1785, Asn1921, Asn2130, Asn2146, Asn2280, Asn2337, Asn2520, Asn2578, Asn2719, and Asn2869 each carry an N-linked (GlcNAc...) asparagine glycan.

Belongs to the CSF1 family. In terms of assembly, interacts with MCD4; CSF1 channels phosphatidylethanolamine to MCD4 in the endoplasmic reticulum at contact sites to support GPI anchor biosynthesis.

It localises to the cell membrane. The protein localises to the endoplasmic reticulum membrane. The protein resides in the mitochondrion membrane. Its function is as follows. Tube-forming lipid transport protein which provides phosphatidylethanolamine for glycosylphosphatidylinositol (GPI) anchor synthesis in the endoplasmic reticulum. Required for the glucose and other nutrients uptake at low temperature. The sequence is that of Protein CSF1 from Saccharomyces cerevisiae (strain ATCC 204508 / S288c) (Baker's yeast).